The following is a 180-amino-acid chain: Diphosphoinositol polyphosphate phosphohydrolase 2 (180 aa).

N-acetylmethionine is present on Met1. Residues Arg10, 18–20 (KKR), and 39–41 (SSR) each bind substrate. In terms of domain architecture, Nudix hydrolase spans 18 to 144 (KKRAACLCFR…VHAEYLEKLK (127 aa)). Residues Gly50 and Glu66 each coordinate Mg(2+). The Nudix box motif lies at 51–72 (GGMEPEEEPGGAAVREVYEEAG). Glu69 acts as the Proton acceptor in catalysis. Residue Glu70 participates in Mg(2+) binding. Residues 89 to 91 (RKH), Arg115, and Lys133 contribute to the substrate site.

This sequence belongs to the Nudix hydrolase family. DIPP subfamily. It depends on Mg(2+) as a cofactor. Mn(2+) serves as cofactor. Expressed in heart and, at lower level in skeletal muscle, pancreas and kidney.

The protein resides in the cytoplasm. It catalyses the reaction diphospho-myo-inositol polyphosphate + H2O = myo-inositol polyphosphate + phosphate.. The enzyme catalyses 5-diphospho-1D-myo-inositol 1,2,3,4,6-pentakisphosphate + H2O = 1D-myo-inositol hexakisphosphate + phosphate + H(+). The catalysed reaction is 3,5-bis(diphospho)-1D-myo-inositol 1,2,4,6-tetrakisphosphate + H2O = 3-diphospho-1D-myo-inositol 1,2,4,5,6-pentakisphosphate + phosphate + 2 H(+). It carries out the reaction 5-diphospho-1D-myo-inositol 1,3,4,6-tetrakisphosphate + H2O = 1D-myo-inositol 1,3,4,5,6-pentakisphosphate + phosphate + H(+). It catalyses the reaction P(1),P(6)-bis(5'-adenosyl) hexaphosphate + H2O = 2 ATP + 2 H(+). The enzyme catalyses P(1),P(5)-bis(5'-adenosyl) pentaphosphate + H2O = ADP + ATP + 2 H(+). The catalysed reaction is 5-phospho-alpha-D-ribose 1-diphosphate + H2O = alpha-D-ribose 1,5-bisphosphate + phosphate + H(+). Its function is as follows. Cleaves the beta-phosphate from diphosphoinositol polyphosphates such as PP-InsP5 (diphosphoinositol pentakisphosphate), PP-InsP4 (diphosphoinositol tetrakisphosphate) and [PP]2-InsP4 (bisdiphosphoinositol tetrakisphosphate), suggesting that it may play a role in signal transduction. Diadenosine polyphosphates, particularly Ap6A (P(1),P(6)-bis(5a-adenosyl) hexaphosphate) and Ap5A (P(1),P(5)-bis(5'-adenosyl) pentaphosphate) are downstream effectors of a signaling cascade that regulates cardiac KATP channels, can also be substrates, although with lower preference than the diphosphoinositol polyphosphates. Can also catalyze the hydrolysis of 5-phosphoribose 1-diphosphate, generating the glycolytic activator ribose 1,5-bisphosphate. Does not play a role in U8 snoRNA decapping activity. Binds U8 snoRNA. In Homo sapiens (Human), this protein is Diphosphoinositol polyphosphate phosphohydrolase 2.